The following is a 269-amino-acid chain: ATP synthase subunit delta (269 aa).

The protein belongs to the ATPase delta chain family. In terms of assembly, F-type ATPases have 2 components, F(1) - the catalytic core - and F(0) - the membrane proton channel. F(1) has five subunits: alpha(3), beta(3), gamma(1), delta(1), epsilon(1). F(0) has three main subunits: a(1), b(2) and c(10-14). The alpha and beta chains form an alternating ring which encloses part of the gamma chain. F(1) is attached to F(0) by a central stalk formed by the gamma and epsilon chains, while a peripheral stalk is formed by the delta and b chains.

It is found in the cell membrane. Its function is as follows. F(1)F(0) ATP synthase produces ATP from ADP in the presence of a proton or sodium gradient. F-type ATPases consist of two structural domains, F(1) containing the extramembraneous catalytic core and F(0) containing the membrane proton channel, linked together by a central stalk and a peripheral stalk. During catalysis, ATP synthesis in the catalytic domain of F(1) is coupled via a rotary mechanism of the central stalk subunits to proton translocation. In terms of biological role, this protein is part of the stalk that links CF(0) to CF(1). It either transmits conformational changes from CF(0) to CF(1) or is implicated in proton conduction. In Thermobifida fusca (strain YX), this protein is ATP synthase subunit delta.